Reading from the N-terminus, the 250-residue chain is Small ribosomal subunit protein uS2 (250 aa).

The protein belongs to the universal ribosomal protein uS2 family.

The sequence is that of Small ribosomal subunit protein uS2 from Acidovorax ebreus (strain TPSY) (Diaphorobacter sp. (strain TPSY)).